Reading from the N-terminus, the 433-residue chain is Tol-Pal system protein TolB (433 aa).

The N-terminal stretch at Met-1 to Ala-26 is a signal peptide.

The protein belongs to the TolB family. As to quaternary structure, the Tol-Pal system is composed of five core proteins: the inner membrane proteins TolA, TolQ and TolR, the periplasmic protein TolB and the outer membrane protein Pal. They form a network linking the inner and outer membranes and the peptidoglycan layer.

Its subcellular location is the periplasm. In terms of biological role, part of the Tol-Pal system, which plays a role in outer membrane invagination during cell division and is important for maintaining outer membrane integrity. This is Tol-Pal system protein TolB from Burkholderia thailandensis (strain ATCC 700388 / DSM 13276 / CCUG 48851 / CIP 106301 / E264).